Reading from the N-terminus, the 370-residue chain is GTPase Obg (370 aa).

The region spanning 1–159 (MKFIDEARIE…RMLKLELKVL (159 aa)) is the Obg domain. The disordered stretch occupies residues 128–147 (LHFKSSTNRAPRQKTDGKPG). Residues 160 to 334 (ADVGLLGMPN…LCYAIYDYLS (175 aa)) form the OBG-type G domain. Residues 166–173 (GMPNAGKS), 191–195 (FTTLA), 213–216 (DIPG), 284–287 (NKLD), and 315–317 (SAL) each bind GTP. Ser173 and Thr193 together coordinate Mg(2+).

Belongs to the TRAFAC class OBG-HflX-like GTPase superfamily. OBG GTPase family. As to quaternary structure, monomer. Mg(2+) serves as cofactor.

The protein resides in the cytoplasm. In terms of biological role, an essential GTPase which binds GTP, GDP and possibly (p)ppGpp with moderate affinity, with high nucleotide exchange rates and a fairly low GTP hydrolysis rate. Plays a role in control of the cell cycle, stress response, ribosome biogenesis and in those bacteria that undergo differentiation, in morphogenesis control. This Burkholderia cenocepacia (strain ATCC BAA-245 / DSM 16553 / LMG 16656 / NCTC 13227 / J2315 / CF5610) (Burkholderia cepacia (strain J2315)) protein is GTPase Obg.